The primary structure comprises 192 residues: Nucleoside triphosphate pyrophosphatase (192 aa).

The active-site Proton acceptor is D73.

It belongs to the Maf family. A divalent metal cation serves as cofactor.

It localises to the cytoplasm. The enzyme catalyses a ribonucleoside 5'-triphosphate + H2O = a ribonucleoside 5'-phosphate + diphosphate + H(+). It carries out the reaction a 2'-deoxyribonucleoside 5'-triphosphate + H2O = a 2'-deoxyribonucleoside 5'-phosphate + diphosphate + H(+). Its function is as follows. Nucleoside triphosphate pyrophosphatase. May have a dual role in cell division arrest and in preventing the incorporation of modified nucleotides into cellular nucleic acids. The protein is Nucleoside triphosphate pyrophosphatase of Ehrlichia canis (strain Jake).